Consider the following 356-residue polypeptide: uncharacterized protein (356 aa).

Residues 1-21 (MHWSRFVGIFLVFSVFSLVNC) form the signal peptide. Residues 293–317 (RPETDYEGANLPNIPSKKGSANQPV) form a disordered region.

This is an uncharacterized protein from Acanthamoeba polyphaga mimivirus (APMV).